We begin with the raw amino-acid sequence, 372 residues long: Chaperone protein DnaJ (372 aa).

The 66-residue stretch at 5–70 (SYYDILGVSK…KKRQAYDQFG (66 aa)) folds into the J domain. The CR-type zinc-finger motif lies at 140 to 218 (GREYKIEIPR…CGGQGLQEKR (79 aa)). Cys-153, Cys-156, Cys-170, Cys-173, Cys-192, Cys-195, Cys-206, and Cys-209 together coordinate Zn(2+). 4 CXXCXGXG motif repeats span residues 153–160 (CVDCNGSG), 170–177 (CPDCGGSG), 192–199 (CPTCRGKG), and 206–213 (CRSCGGQG).

It belongs to the DnaJ family. In terms of assembly, homodimer. Zn(2+) serves as cofactor.

The protein localises to the cytoplasm. Its function is as follows. Participates actively in the response to hyperosmotic and heat shock by preventing the aggregation of stress-denatured proteins and by disaggregating proteins, also in an autonomous, DnaK-independent fashion. Unfolded proteins bind initially to DnaJ; upon interaction with the DnaJ-bound protein, DnaK hydrolyzes its bound ATP, resulting in the formation of a stable complex. GrpE releases ADP from DnaK; ATP binding to DnaK triggers the release of the substrate protein, thus completing the reaction cycle. Several rounds of ATP-dependent interactions between DnaJ, DnaK and GrpE are required for fully efficient folding. Also involved, together with DnaK and GrpE, in the DNA replication of plasmids through activation of initiation proteins. This is Chaperone protein DnaJ from Leptospira interrogans serogroup Icterohaemorrhagiae serovar copenhageni (strain Fiocruz L1-130).